The sequence spans 235 residues: Endonuclease V (235 aa).

Residues Asp45 and Asp115 each contribute to the Mg(2+) site.

It belongs to the endonuclease V family. The cofactor is Mg(2+).

The protein resides in the cytoplasm. The enzyme catalyses Endonucleolytic cleavage at apurinic or apyrimidinic sites to products with a 5'-phosphate.. Its function is as follows. DNA repair enzyme involved in the repair of deaminated bases. Selectively cleaves double-stranded DNA at the second phosphodiester bond 3' to a deoxyinosine leaving behind the intact lesion on the nicked DNA. This chain is Endonuclease V, found in Bacillus thuringiensis subsp. konkukian (strain 97-27).